The following is a 213-amino-acid chain: Uridine kinase (213 aa).

An ATP-binding site is contributed by 15–22 (GASASGKS).

This sequence belongs to the uridine kinase family.

Its subcellular location is the cytoplasm. The enzyme catalyses uridine + ATP = UMP + ADP + H(+). It catalyses the reaction cytidine + ATP = CMP + ADP + H(+). The protein operates within pyrimidine metabolism; CTP biosynthesis via salvage pathway; CTP from cytidine: step 1/3. It functions in the pathway pyrimidine metabolism; UMP biosynthesis via salvage pathway; UMP from uridine: step 1/1. The polypeptide is Uridine kinase (Yersinia pseudotuberculosis serotype O:1b (strain IP 31758)).